The sequence spans 326 residues: Probable GTP 3',8-cyclase (326 aa).

Residues 6-235 (LYGRPVLSLR…NRPRYIIRTQ (230 aa)) enclose the Radical SAM core domain. Position 15 (arginine 15) interacts with GTP. 3 residues coordinate [4Fe-4S] cluster: cysteine 22, cysteine 26, and cysteine 29. Residue lysine 62 participates in GTP binding. An S-adenosyl-L-methionine-binding site is contributed by glycine 66. Residue threonine 92 coordinates GTP. Residue serine 116 participates in S-adenosyl-L-methionine binding. Lysine 153 serves as a coordination point for GTP. Cysteine 253 and cysteine 256 together coordinate [4Fe-4S] cluster. A GTP-binding site is contributed by 258-260 (RLR). Cysteine 270 provides a ligand contact to [4Fe-4S] cluster.

This sequence belongs to the radical SAM superfamily. MoaA family. [4Fe-4S] cluster is required as a cofactor.

It catalyses the reaction GTP + AH2 + S-adenosyl-L-methionine = (8S)-3',8-cyclo-7,8-dihydroguanosine 5'-triphosphate + 5'-deoxyadenosine + L-methionine + A + H(+). The protein operates within cofactor biosynthesis; molybdopterin biosynthesis. In terms of biological role, catalyzes the cyclization of GTP to (8S)-3',8-cyclo-7,8-dihydroguanosine 5'-triphosphate. The protein is Probable GTP 3',8-cyclase of Thermoplasma volcanium (strain ATCC 51530 / DSM 4299 / JCM 9571 / NBRC 15438 / GSS1).